The following is a 1895-amino-acid chain: 1,3-beta-glucan synthase component GSC2 (1895 aa).

2 stretches are compositionally biased toward polar residues: residues 1-16 (MSYNDPNLNGQYYSNG) and 25-34 (PTYQVTQDQS). 2 disordered regions span residues 1–143 (MSYN…PYGN) and 269–292 (ARKAKKKNKKAMQEASPEDTEETL). Residues 1–473 (MSYNDPNLNG…WLHLVTNFNR (473 aa)) lie on the Extracellular side of the membrane. Residues 65–78 (QFPQGQDPSQDQGP) are compositionally biased toward low complexity. Polar residues-rich tracts occupy residues 79–107 (YNNDASYYNQPPNMMNPSSQDGENFSDFS) and 115–141 (TYPNDQYTPSQMSYPDQDGSSGASTPY). The span at 269–278 (ARKAKKKNKK) shows a compositional bias: basic residues. Lys-278 is covalently cross-linked (Glycyl lysine isopeptide (Lys-Gly) (interchain with G-Cter in ubiquitin)). Phosphothreonine is present on residues Thr-288 and Thr-291. Lys-405 participates in a covalent cross-link: Glycyl lysine isopeptide (Lys-Gly) (interchain with G-Cter in ubiquitin). A helical transmembrane segment spans residues 474–494 (IWIMHISVYWMYCAYNAPTFY). Residues 495-511 (THNYQQLVDNQPLAAYK) lie on the Cytoplasmic side of the membrane. The chain crosses the membrane as a helical span at residues 512–532 (WATAALGGTVASLIQVAATLC). Topologically, residues 533–550 (EWSFVPRKWAGAQHLSRR) are extracellular. The helical transmembrane segment at 551–571 (FWFLCVIMGINLGPVIFVFAY) threads the bilayer. Topologically, residues 572-582 (DKDTVYSTAAH) are cytoplasmic. Residues 583-603 (VVGAVMFFVAVATLVFFSVMP) traverse the membrane as a helical segment. Over 604 to 1579 (LGGLFTSYMK…DASRAHRTNL (976 aa)) the chain is Extracellular. Glycyl lysine isopeptide (Lys-Gly) (interchain with G-Cter in ubiquitin) cross-links involve residues Lys-929, Lys-934, Lys-1558, and Lys-1566. Residues 1580–1600 (IMAEIIPCAIYAAGCFIAFTF) form a helical membrane-spanning segment. At 1601 to 1620 (INAQTGVKTTDEDRVNSTLR) the chain is on the cytoplasmic side. Residues 1621–1641 (IIICTLAPIVIDIGVLFFCMG) form a helical membrane-spanning segment. Topologically, residues 1642–1758 (LSCCSGPLLG…LTAKVIELSE (117 aa)) are extracellular. A helical membrane pass occupies residues 1759-1779 (FAADFVLGHVILIFQLPVICI). The Cytoplasmic segment spans residues 1780–1821 (PKIDKFHSIMLFWLKPSRQIRPPIYSLKQARLRKRMVRRYCS). Residues 1822 to 1842 (LYFLVLIIFAGCIVGPAVASA) form a helical membrane-spanning segment. Residues 1843–1895 (HVPKDLGSGLTGTFHNLVQPRNVSNNDTGSQMSTYKSHYYTHTPSLKTWSTIK) lie on the Extracellular side of the membrane.

The protein belongs to the glycosyltransferase 48 family. As to quaternary structure, component of the 1,3-beta-glucan synthase (GS) complex, composed of two alternate catalytic subunits FKS1 or GSC2, and a regulatory subunit RHO1. Interacts with SMK1.

Its subcellular location is the membrane. The catalysed reaction is [(1-&gt;3)-beta-D-glucosyl](n) + UDP-alpha-D-glucose = [(1-&gt;3)-beta-D-glucosyl](n+1) + UDP + H(+). Alternate catalytic subunit of the 1,3-beta-glucan synthase (GS) complex. Synthesizes 1,3-beta-glucan, a major structural component of the yeast cell wall. Required for spore wall assembly. Negative regulation of activity by SMK1 is important for spore wall deposition. Activity is positively regulated by RHO1. The protein is 1,3-beta-glucan synthase component GSC2 of Saccharomyces cerevisiae (strain ATCC 204508 / S288c) (Baker's yeast).